Here is a 145-residue protein sequence, read N- to C-terminus: Acidic phospholipase A2 (145 aa).

The N-terminal stretch at 1 to 19 is a signal peptide; sequence MNPAHLLILSAVCVSLLGA. A propeptide spanning residues 20–27 is cleaved from the precursor; the sequence is ANVPPQHL. 7 cysteine pairs are disulfide-bonded: cysteine 38–cysteine 97, cysteine 52–cysteine 144, cysteine 54–cysteine 70, cysteine 69–cysteine 125, cysteine 76–cysteine 118, cysteine 86–cysteine 111, and cysteine 104–cysteine 116. 3 residues coordinate Ca(2+): tyrosine 53, glycine 55, and glycine 57. Residue histidine 73 is part of the active site. Aspartate 74 is a binding site for Ca(2+). Aspartate 119 is a catalytic residue.

This sequence belongs to the phospholipase A2 family. Group I subfamily. D49 sub-subfamily. Ca(2+) is required as a cofactor. Expressed by the venom gland.

It is found in the secreted. The catalysed reaction is a 1,2-diacyl-sn-glycero-3-phosphocholine + H2O = a 1-acyl-sn-glycero-3-phosphocholine + a fatty acid + H(+). PLA2 catalyzes the calcium-dependent hydrolysis of the 2-acyl groups in 3-sn-phosphoglycerides. The chain is Acidic phospholipase A2 from Bungarus multicinctus (Many-banded krait).